Consider the following 317-residue polypeptide: Tetraspanin-15 (317 aa).

Residues 1-43 are disordered; it reads MADNAQVVPVEEPAATATATATATATTEPEAKSSDQMESQSDN. Over 1-60 the chain is Cytoplasmic; it reads MADNAQVVPVEEPAATATATATATATTEPEAKSSDQMESQSDNKPPMGTLMALVNILAAG. The span at 7–28 shows a compositional bias: low complexity; sequence VVPVEEPAATATATATATATTE. The helical transmembrane segment at 61–81 threads the bilayer; sequence VLPIFTFVLSLTLLGYAVWLL. The Extracellular portion of the chain corresponds to 82-96; the sequence is YMRSYDCEDILGLPR. The helical transmembrane segment at 97–117 threads the bilayer; sequence VQTLASVGLLAVFVVSNAALF. The Cytoplasmic portion of the chain corresponds to 118 to 126; the sequence is LRRKFPMPA. Residues 127-147 traverse the membrane as a helical segment; sequence LVVMVVVLLLMLFIGLAYAGV. The Extracellular portion of the chain corresponds to 148-287; the sequence is NEMQSRRFPA…IRSVRRKWWQ (140 aa). Residue asparagine 224 is glycosylated (N-linked (GlcNAc...) asparagine). Residues 288–308 form a helical membrane-spanning segment; it reads LGIFLIVISILLLMSHLLIFL. The Cytoplasmic segment spans residues 309 to 317; it reads ATFWERFKG.

It belongs to the tetraspanin (TM4SF) family.

Its subcellular location is the membrane. Functionally, may be involved in the regulation of cell differentiation. In Arabidopsis thaliana (Mouse-ear cress), this protein is Tetraspanin-15 (TET15).